Here is a 115-residue protein sequence, read N- to C-terminus: Large ribosomal subunit protein P2 (115 aa).

Residue Met-1 is modified to N-acetylmethionine. Residues Ser-17 and Ser-19 each carry the phosphoserine modification. Position 21 is an N6-acetyllysine; alternate (Lys-21). Lys-21 is modified (N6-succinyllysine; alternate). Low complexity predominate over residues 69 to 90 (GAXAVAAAPGSXAPAAGSAPAA). Residues 69-115 (GAXAVAAAPGSXAPAAGSAPAAAEEKKEEKKEESEESDDDMGFGLFD) form a disordered region. Phosphoserine occurs at positions 79 and 86. Residues 91–101 (AEEKKEEKKEE) are compositionally biased toward basic and acidic residues. Phosphoserine is present on residues Ser-102 and Ser-105.

The protein belongs to the eukaryotic ribosomal protein P1/P2 family. Heterodimer with RPLP1 at the lateral ribosomal stalk of the large ribosomal subunit.

In terms of biological role, plays an important role in the elongation step of protein synthesis. In Sus scrofa (Pig), this protein is Large ribosomal subunit protein P2 (RPLP2).